A 419-amino-acid polypeptide reads, in one-letter code: UDP-N-acetylglucosamine 1-carboxyvinyltransferase (419 aa).

Phosphoenolpyruvate is bound at residue 22 to 23 (KN). Arg93 contributes to the UDP-N-acetyl-alpha-D-glucosamine binding site. The Proton donor role is filled by Cys117. Cys117 bears the 2-(S-cysteinyl)pyruvic acid O-phosphothioketal mark. Positions 307 and 329 each coordinate UDP-N-acetyl-alpha-D-glucosamine.

The protein belongs to the EPSP synthase family. MurA subfamily.

The protein localises to the cytoplasm. It catalyses the reaction phosphoenolpyruvate + UDP-N-acetyl-alpha-D-glucosamine = UDP-N-acetyl-3-O-(1-carboxyvinyl)-alpha-D-glucosamine + phosphate. It functions in the pathway cell wall biogenesis; peptidoglycan biosynthesis. Functionally, cell wall formation. Adds enolpyruvyl to UDP-N-acetylglucosamine. The protein is UDP-N-acetylglucosamine 1-carboxyvinyltransferase of Shewanella sp. (strain MR-7).